Reading from the N-terminus, the 804-residue chain is uncharacterized protein (804 aa).

Helical transmembrane passes span 15–35 (LLIVWLALSLAVACVLALGNI), 243–263 (FLLLSALLTLLLAVAAVAVAM), 301–321 (LSAVTGGAIGLLFENVLMVLL), 333–353 (SLWPWLWALGTMTVISLLVGL), 381–401 (FYLPIVSVVVVLLLAGLMGGS), 403–423 (LLWAVLAGAVVLALLCGVLGW), 453–473 (TLSQLSAFSLSFMLLALLLVL), 680–700 (ALEVMVVLVTACGMLLLLAQV), 734–754 (MLGFVSGLVAAIGAETALAVL), and 769–789 (LWIVLPCSGALLLSLFGGWLG).

The protein belongs to the ABC-4 integral membrane protein family.

It is found in the cell membrane. This is an uncharacterized protein from Escherichia coli (strain K12).